Reading from the N-terminus, the 423-residue chain is UDP-N-acetylglucosamine 1-carboxyvinyltransferase 2 (423 aa).

23 to 24 (KN) contributes to the phosphoenolpyruvate binding site. Arg93 is a UDP-N-acetyl-alpha-D-glucosamine binding site. Catalysis depends on Cys117, which acts as the Proton donor. A 2-(S-cysteinyl)pyruvic acid O-phosphothioketal modification is found at Cys117. UDP-N-acetyl-alpha-D-glucosamine-binding positions include 122 to 126 (RPIDQ), Asp305, and Ile327.

It belongs to the EPSP synthase family. MurA subfamily.

The protein resides in the cytoplasm. The enzyme catalyses phosphoenolpyruvate + UDP-N-acetyl-alpha-D-glucosamine = UDP-N-acetyl-3-O-(1-carboxyvinyl)-alpha-D-glucosamine + phosphate. Its pathway is cell wall biogenesis; peptidoglycan biosynthesis. In terms of biological role, cell wall formation. Adds enolpyruvyl to UDP-N-acetylglucosamine. This chain is UDP-N-acetylglucosamine 1-carboxyvinyltransferase 2, found in Listeria monocytogenes serovar 1/2a (strain ATCC BAA-679 / EGD-e).